The sequence spans 617 residues: MKIALLANPARGEINVLLATAYELIRLGHEVVFLTGSSFRNAIAEFKDEQNDKLLASRIQFSDLGTAKAFEDFTRGMQSHLKGLRKPPGDYSSMEICQIVALVTEQEFREAATLVRDRLLELDPDMIAVDALSPNLVTGCRMTGLPWMFTVPCSPSLTATRKSLFDPHPMGSRRQRTLMSALENLKLTIRETYGNAIKKDLYARRALLKKEFGLNSMGFNADSAIVPPLWKDRNCVGGIHFNTPGLWDSIRQPHQITFVGCGVTSDPENHSPSQAGTPISEIAGWSPLTKLSTSFDQSGQGERDLDVEWMDAAYAAGESVVYLNMGSMFLWTDDEVRACLRAFERLHRESGGKIKLLFKLNKPKRNPGSPGFTSPLNSPTAVATPKWDEKRPIDSRRPSGVSTLIMAEKLSEAIKNVKPRRKTDAEKGYSQFMLSEFEGLEYVRFTRWVHDQRRIYKHPALRVVIHHGGGNSFNEAVHYGLPQMILSQWFDTHEYAILAERFGIGLRSKHAPFVDEQDMFAKMLRLLRGPEAEKIQANAKIWSTRSRNAGGAPAAARLLETHALLHRQRKQARDPTPTAKTSLSVDTTEVATPTFTDTETSLSPKILSSAASTVTNP.

2 disordered regions span residues 365-396 (RNPG…IDSR) and 567-617 (RQRK…VTNP). Positions 371 to 381 (GFTSPLNSPTA) are enriched in polar residues. Over residues 386–396 (KWDEKRPIDSR) the composition is skewed to basic and acidic residues. Residues 578–603 (TAKTSLSVDTTEVATPTFTDTETSLS) show a composition bias toward polar residues.

This sequence belongs to the UDP-glycosyltransferase family.

It participates in secondary metabolite biosynthesis. Glycosyltransferase; part of the gene cluster that mediates the biosynthesis of mannosylerythritol lipids (MELs), surface-active substances that enhance the availability of water-insoluble substrates. Depending on the number of acetyl groups, mannosylerythritol lipids can be differentiated into MEL A (fully acetylated), MEL B and MEL C (monoacetylated at R-6 and R-4, respectively), and the fully deacetylated MEL D. The first step in the pathway is the generation of mannosylerythritol by the glycosyltransferase EMT1 which catalyzes the transfer of GDP-mannose to the C-4 atom of meso-erythritol. This reaction has to be stereospecific, since only mannosyl-D-erythritol is generated. The produced disaccharide is subsequently acylated with fatty acids of various lengths by the acyltransferases MAC1 and MAC2 at positions C-2 and C-3, repectively. The existence of MEL derivatives which carry an acetyl group at C-2 implies that at least MAC1 also accepts acetyl-CoA as a donor. The final step of MEL biosynthesis is the acetylation of the fully acylated mannosylerythritol lipids catalyzed by the acetyl-CoA-dependent acetyltransferase MAT1. MAT1 displays a relaxed regioselectivity and is able to transfer acetylgroups to both positions C-4 and C-6 of the mannosyl moiety. This Pseudozyma antarctica (strain T-34) (Yeast) protein is Erythritol-mannosyl-transferase 1.